We begin with the raw amino-acid sequence, 116 residues long: SGSCSLKTCWLQLADFRSVGTQLKERYDLAKVVRVTRKSRLEPRNRKLGTPTPTDLVHLESSPDYCARNGSSGSLGTIGRECDKRSAGMDGCQLMCCGRGYDHFKVTVTQRCNCKF.

The O-palmitoleoyl serine; by PORCN moiety is linked to residue Ser-1. Asn-69 carries an N-linked (GlcNAc...) asparagine glycan. Cys-82 and Cys-97 form a disulfide bridge.

Belongs to the Wnt family. Post-translationally, palmitoleoylation is required for efficient binding to frizzled receptors. Depalmitoleoylation leads to Wnt signaling pathway inhibition.

The protein resides in the secreted. The protein localises to the extracellular space. Its subcellular location is the extracellular matrix. Functionally, ligand for members of the frizzled family of seven transmembrane receptors. Probable developmental protein. May be a signaling molecule which affects the development of discrete regions of tissues. Is likely to signal over only few cell diameters. This is Protein Wnt-5(III) (WNT-5(III)) from Eptatretus stoutii (Pacific hagfish).